The primary structure comprises 359 residues: EGF-like domain containing protein 2 (359 aa).

The first 20 residues, 1–20 (MPPFISHFFLLSTFASLALC), serve as a signal peptide directing secretion. EGF-like domains are found at residues 21-55 (SFYC…FNCG) and 61-93 (ISAA…PTCQ). Disulfide bonds link Cys-24/Cys-37, Cys-31/Cys-43, Cys-45/Cys-54, Cys-65/Cys-75, Cys-69/Cys-81, and Cys-83/Cys-92.

As to expression, prismatic layer of shell (at protein level). Expressed primarily in the mantle with highest level in the mantle edge and lower level in the mantle pallium.

The protein resides in the secreted. This chain is EGF-like domain containing protein 2, found in Margaritifera margaritifera (Freshwater pearl mussel).